Here is a 371-residue protein sequence, read N- to C-terminus: Histidinol-phosphate aminotransferase (371 aa).

The residue at position 228 (lysine 228) is an N6-(pyridoxal phosphate)lysine.

Belongs to the class-II pyridoxal-phosphate-dependent aminotransferase family. Histidinol-phosphate aminotransferase subfamily. As to quaternary structure, homodimer. It depends on pyridoxal 5'-phosphate as a cofactor.

The enzyme catalyses L-histidinol phosphate + 2-oxoglutarate = 3-(imidazol-4-yl)-2-oxopropyl phosphate + L-glutamate. It functions in the pathway amino-acid biosynthesis; L-histidine biosynthesis; L-histidine from 5-phospho-alpha-D-ribose 1-diphosphate: step 7/9. This is Histidinol-phosphate aminotransferase from Thermosynechococcus vestitus (strain NIES-2133 / IAM M-273 / BP-1).